Consider the following 892-residue polypeptide: Alanine--tRNA ligase (892 aa).

Positions 596, 600, 700, and 704 each coordinate Zn(2+).

This sequence belongs to the class-II aminoacyl-tRNA synthetase family. The cofactor is Zn(2+).

It localises to the cytoplasm. It carries out the reaction tRNA(Ala) + L-alanine + ATP = L-alanyl-tRNA(Ala) + AMP + diphosphate. Functionally, catalyzes the attachment of alanine to tRNA(Ala) in a two-step reaction: alanine is first activated by ATP to form Ala-AMP and then transferred to the acceptor end of tRNA(Ala). Also edits incorrectly charged Ser-tRNA(Ala) and Gly-tRNA(Ala) via its editing domain. The protein is Alanine--tRNA ligase of Methanococcus maripaludis (strain C6 / ATCC BAA-1332).